Consider the following 132-residue polypeptide: Small ribosomal subunit protein uS8 (132 aa).

This sequence belongs to the universal ribosomal protein uS8 family. In terms of assembly, part of the 30S ribosomal subunit. Contacts proteins S5 and S12.

Its function is as follows. One of the primary rRNA binding proteins, it binds directly to 16S rRNA central domain where it helps coordinate assembly of the platform of the 30S subunit. The chain is Small ribosomal subunit protein uS8 from Clostridium botulinum (strain 657 / Type Ba4).